Here is a 1160-residue protein sequence, read N- to C-terminus: Nonribosomal peptide synthetase fmqC (1160 aa).

Positions 132-520 (TYRELNDRSS…LGEVEHALQQ (389 aa)) are adenylation. In terms of domain architecture, Carrier spans 642 to 719 (QPVTQLEESL…EMAGMLDGVT (78 aa)). Serine 679 is subject to O-(pantetheine 4'-phosphoryl)serine. Positions 749-1025 (CTLEDLQEGF…CAAAETPMRI (277 aa)) are condensation.

Belongs to the NRP synthetase family. In terms of assembly, interacts with the mitogen-activated protein kinase mpkA. Phosphorylated by mpkA during conidiogenesis.

The protein resides in the cytoplasm. It functions in the pathway alkaloid biosynthesis. Its function is as follows. Nonribosomal peptide synthetase; part of the gene cluster that mediates the biosynthesis of the antitumor fumiquinazolines that confer a dual-usage capability to defend against phagocytes in the environment and animal hosts. The simplest member is fumiquinazoline F (FQF) with a 6-6-6 tricyclic core derived from anthranilic acid (Ant), tryptophan (Trp), and alanine (Ala). The trimodular NRPS fmqA is responsible for FQF formation. Modules 1, 2 and 3 of fmqA are predicted to activate and load Ant, Trp and Ala, respectively, providing for the assembly of an Ant-Trp-Ala-S-enzyme intermediate that would undergo double cyclization for chain release and generation of the tricyclic 6-6-6 product fumiquinazoline F. The presence of an E domain predicted for module 2 of fmqA is consistent with epimerization of L-Trp to D-Trp during assembly to generate the R-stereocenter at C14 of FQF. The FAD-dependent monooxygenase fmqB and the monomodular NRPS fmqC then maturate FQF to FQA. FmqB oxidizes the 2',3'-double bond of the indole side chain of FQF, and fmqC activates L-Ala as the adenylate, installs it as the pantetheinyl thioester on its carrier protein domain, and acylates the oxidized indole for subsequent intramolecular cyclization to create the 6-5-5-imidazolindolone of FQA. The FAD-linked oxidoreductase fmqD introduces a third layer of scaffold complexity by converting FQA to the spirohemiaminal FQC, presumably by catalyzing the formation of a transient imine within the pyrazinone ring. FQC subsequently converts nonenzymatically to the known cyclic aminal FQD. This is Nonribosomal peptide synthetase fmqC from Aspergillus fumigatus (strain ATCC MYA-4609 / CBS 101355 / FGSC A1100 / Af293) (Neosartorya fumigata).